Reading from the N-terminus, the 86-residue chain is Toxin Aam2 (86 aa).

The signal sequence occupies residues 1–20 (MNYLITISLALLLMTGVASG). The LCN-type CS-alpha/beta domain maps to 22–84 (RDGYIADAGN…VPIKVPGKCN (63 aa)). 4 disulfide bridges follow: cysteine 32–cysteine 83, cysteine 36–cysteine 56, cysteine 42–cysteine 66, and cysteine 46–cysteine 68. The residue at position 84 (asparagine 84) is an Asparagine amide.

The protein belongs to the long (4 C-C) scorpion toxin superfamily. Sodium channel inhibitor family. Alpha subfamily. In terms of tissue distribution, expressed by the venom gland.

Its subcellular location is the secreted. Functionally, alpha toxins bind voltage-independently at site-3 of sodium channels (Nav) and inhibit the inactivation of the activated channels, thereby blocking neuronal transmission. In Androctonus amoreuxi (African fattail scorpion), this protein is Toxin Aam2.